The primary structure comprises 250 residues: Acidic endochitinase (250 aa).

At glutamine 1 the chain carries Pyrrolidone carboxylic acid. The region spanning 1-36 (QNCQCDTTIYCCSQHGYCGNSYDYCGPGCQAGPCWD) is the Chitin-binding type-1 domain. Intrachain disulfides connect cysteine 3/cysteine 12, cysteine 5/cysteine 18, cysteine 11/cysteine 25, cysteine 29/cysteine 34, cysteine 66/cysteine 115, cysteine 128/cysteine 136, and cysteine 218/cysteine 250. Glutamate 110 serves as the catalytic Proton donor.

It belongs to the glycosyl hydrolase 19 family. Chitinase class I subfamily.

It catalyses the reaction Random endo-hydrolysis of N-acetyl-beta-D-glucosaminide (1-&gt;4)-beta-linkages in chitin and chitodextrins.. Functionally, defense against chitin-containing fungal pathogens. In Dioscorea japonica (Japanese yam), this protein is Acidic endochitinase.